A 126-amino-acid polypeptide reads, in one-letter code: Desulfoferrodoxin (126 aa).

Fe cation-binding residues include cysteine 10, cysteine 13, cysteine 29, cysteine 30, histidine 49, histidine 69, histidine 75, cysteine 116, and histidine 119.

The protein belongs to the desulfoferrodoxin family. In terms of assembly, homodimer. Fe(3+) serves as cofactor. The cofactor is Cu(2+).

It carries out the reaction reduced [rubredoxin] + superoxide + 2 H(+) = oxidized [rubredoxin] + H2O2. Its function is as follows. Catalyzes the one-electron reduction of superoxide anion radical to hydrogen peroxide at a nonheme ferrous iron center. Plays a fundamental role in case of oxidative stress via its superoxide detoxification activity. The polypeptide is Desulfoferrodoxin (dfx) (Syntrophotalea carbinolica (strain DSM 2380 / NBRC 103641 / GraBd1) (Pelobacter carbinolicus)).